We begin with the raw amino-acid sequence, 1222 residues long: ATP-dependent helicase/nuclease subunit A (1222 aa).

A UvrD-like helicase ATP-binding domain is found at 39–495 (QKRTAQQIEA…ILLKENFRSQ (457 aa)). 60–67 (ASAGSGKT) is an ATP binding site. One can recognise a UvrD-like helicase C-terminal domain in the interval 524–810 (QLIAGSHAQT…NLMTIHKSKG (287 aa)).

Belongs to the helicase family. AddA subfamily. In terms of assembly, heterodimer of AddA and AddB/RexB. Mg(2+) serves as cofactor.

It carries out the reaction Couples ATP hydrolysis with the unwinding of duplex DNA by translocating in the 3'-5' direction.. It catalyses the reaction ATP + H2O = ADP + phosphate + H(+). Functionally, the heterodimer acts as both an ATP-dependent DNA helicase and an ATP-dependent, dual-direction single-stranded exonuclease. Recognizes the chi site generating a DNA molecule suitable for the initiation of homologous recombination. The AddA nuclease domain is required for chi fragment generation; this subunit has the helicase and 3' -&gt; 5' nuclease activities. The sequence is that of ATP-dependent helicase/nuclease subunit A from Streptococcus pyogenes serotype M2 (strain MGAS10270).